A 529-amino-acid polypeptide reads, in one-letter code: MDTRFHCVYLLTSLDPQCAGEYYIGYTVDPIRRLRQHNGEIVSGAWRTKRRGRPWELLCCVSGFGEDRIALKFEWCWQHPTKSTRLKTQMTQLRGVHRLPYAVGVLHLLLRADLFARLQLTLHIFEPERVGRVVAELQGRVPSISPLVATSLLRIEEITKERFMSLYLDGVSGDGTAGDGCVYFVTAPLSSQPDVDAPSRRVRSCRYLSEEDVFRQHARVKELLEANQCPCALCSLPLRSPYFVRCYRTPFCALRAHLACLAMWFTYETMQKRDVTMGQSTRNERSGEYSNKIKDDSNDGTMDAHASGRQLHSLSVNNADFSSSRDAGSILDSSGHISAFEESRCASSPSLTLLPCQPCPCPLCDEPLQWGALVHDLKRRAVLEKRWMERQRREKIEAALAERLQRLQNSSLTERKSRRKATPALGQKRNRGEYCGDTVGDGGKEAVTNWRARAMDGCDSWNDTNDFSHSVSLPPSRDEGYACDSSRRGVGGSKHTTRMTDEGKNDSITDICDCVLQLTEFNLDEWLDA.

In terms of domain architecture, GIY-YIG spans 4–89 (RFHCVYLLTS…PTKSTRLKTQ (86 aa)). The segment at 231–364 (CALCSLPLRS…PCQPCPCPLC (134 aa)) adopts an SLX1-type zinc-finger fold. Disordered regions lie at residues 275 to 305 (VTMG…MDAH), 409 to 437 (NSSL…YCGD), and 470 to 501 (SVSL…RMTD). A compositionally biased stretch (basic and acidic residues) spans 282–297 (RNERSGEYSNKIKDDS).

This sequence belongs to the SLX1 family. Forms a heterodimer with a member of the SLX4 family. The cofactor is a divalent metal cation.

The protein resides in the nucleus. In terms of biological role, catalytic subunit of a heterodimeric structure-specific endonuclease that resolves DNA secondary structures generated during DNA repair and recombination. Has endonuclease activity towards branched DNA substrates, introducing single-strand cuts in duplex DNA close to junctions with ss-DNA. The chain is Structure-specific endonuclease subunit SLX1 homolog 1 from Trypanosoma cruzi (strain CL Brener).